Consider the following 628-residue polypeptide: DNA mismatch repair protein MutL (628 aa).

The disordered stretch occupies residues 334-367; that stretch reads SDFAQPSADNMPKPESPGAPAAHGRKDDAPAAHA. Residues 357–367 are compositionally biased toward basic and acidic residues; that stretch reads GRKDDAPAAHA.

It belongs to the DNA mismatch repair MutL/HexB family.

Functionally, this protein is involved in the repair of mismatches in DNA. It is required for dam-dependent methyl-directed DNA mismatch repair. May act as a 'molecular matchmaker', a protein that promotes the formation of a stable complex between two or more DNA-binding proteins in an ATP-dependent manner without itself being part of a final effector complex. In Opitutus terrae (strain DSM 11246 / JCM 15787 / PB90-1), this protein is DNA mismatch repair protein MutL.